A 355-amino-acid polypeptide reads, in one-letter code: MGCTVSAEDKAAAERSRMIDRNLREDGEKAAREVKLLLLGAGESGKSTIVKQMKIIHEDGYSEEECRQYKAVVYSNTIQSIMAIIKAMGNLQIDFGDSSRADDARQLFALACTAEEQGIMPEDLANVIRRLWADHGVQACFNRSREYQLNDSAAYYLNDLERIARADYIPTQQDVLRTRVKTTGIVETHFTFKDLHFKMFDVGGQRSERKKWIHCFEGVTAIIFCVALSAYDLVLAEDEEMNRMHESMKLFDSICNNKWFTDTSIILFLNKKDLFEEKIVHSPLTICFPEYTGANKYDEAAGYIQSKFEDLNKRKDTKEIYTHFTCATDTKNVQFVFDAVTDVIIKNNLKDCGLF.

Residue glycine 2 is the site of N-myristoyl glycine attachment. Cysteine 3 carries S-palmitoyl cysteine lipidation. The 324-residue stretch at 32–355 (REVKLLLLGA…KNNLKDCGLF (324 aa)) folds into the G-alpha domain. The G1 motif stretch occupies residues 35 to 48 (KLLLLGAGESGKST). Residues 40–47 (GAGESGKS), 176–182 (LRTRVKT), 201–205 (DVGGQ), 270–273 (NKKD), and alanine 327 contribute to the GTP site. The Mg(2+) site is built by serine 47 and threonine 182. The tract at residues 174–182 (DVLRTRVKT) is G2 motif. The segment at 197-206 (FKMFDVGGQR) is G3 motif. The G4 motif stretch occupies residues 266–273 (ILFLNKKD). The G5 motif stretch occupies residues 325–330 (TCATDT).

The protein belongs to the G-alpha family. G(i/o/t/z) subfamily. In terms of assembly, g proteins are composed of 3 units; alpha, beta and gamma. The alpha chain contains the guanine nucleotide binding site.

Its subcellular location is the cytoplasm. The protein localises to the cytoskeleton. It localises to the microtubule organizing center. It is found in the centrosome. The protein resides in the cell membrane. In terms of biological role, guanine nucleotide-binding proteins (G proteins) are involved as modulators or transducers in various transmembrane signaling systems. The G(i) proteins are involved in hormonal regulation of adenylate cyclase: they inhibit the cyclase in response to beta-adrenergic stimuli. May play a role in cell division. The sequence is that of Guanine nucleotide-binding protein G(i) subunit alpha-2 (GNAI2) from Gallus gallus (Chicken).